Here is a 679-residue protein sequence, read N- to C-terminus: Transmembrane protein 214-B (679 aa).

Residues 1 to 94 form a disordered region; it reads MASGAPDGKW…KKKPQSGDSV (94 aa). A compositionally biased stretch (basic and acidic residues) spans 18–30; that stretch reads KSGERREGERKAL. N-linked (GlcNAc...) asparagine glycans are attached at residues Asn-70, Asn-298, and Asn-322. Transmembrane regions (helical) follow at residues 468 to 488 and 606 to 626; these read GGFP…GSVL and LLLH…EAAV.

Belongs to the TMEM214 family. In terms of assembly, constitutively interacts with CASP4; required for the localization of procaspase 4 to the ER.

The protein resides in the endoplasmic reticulum membrane. Its function is as follows. Critical mediator, in cooperation with CASP4, of endoplasmic reticulum-stress induced apoptosis. Required or the activation of CASP4 following endoplasmic reticulum stress. The sequence is that of Transmembrane protein 214-B (tmem214-b) from Xenopus laevis (African clawed frog).